The chain runs to 247 residues: Probable transcriptional regulatory protein plu2109 (247 aa).

The protein belongs to the TACO1 family.

It localises to the cytoplasm. This chain is Probable transcriptional regulatory protein plu2109, found in Photorhabdus laumondii subsp. laumondii (strain DSM 15139 / CIP 105565 / TT01) (Photorhabdus luminescens subsp. laumondii).